The chain runs to 39 residues: Larval cuticle protein SC6 (39 aa).

A Chitin-binding type R&amp;R domain is found at 15-39; the sequence is VDQFKYGLELDNSIKADQEGHLEGD.

In terms of biological role, component of the cuticle of the larva of flesh fly. In Sarcophaga bullata (Grey flesh fly), this protein is Larval cuticle protein SC6.